The following is a 236-amino-acid chain: Small ribosomal subunit protein uS3 (236 aa).

The region spanning 39 to 107 is the KH type-2 domain; sequence IRLYVLEELK…ETSLNIVEIH (69 aa). A disordered region spans residues 216-236; the sequence is ERRAAEVDHSGSSSNRRRENA.

Belongs to the universal ribosomal protein uS3 family. In terms of assembly, part of the 30S ribosomal subunit. Forms a tight complex with proteins S10 and S14.

In terms of biological role, binds the lower part of the 30S subunit head. Binds mRNA in the 70S ribosome, positioning it for translation. In Bartonella henselae (strain ATCC 49882 / DSM 28221 / CCUG 30454 / Houston 1) (Rochalimaea henselae), this protein is Small ribosomal subunit protein uS3.